The chain runs to 332 residues: Phenylalanine--tRNA ligase alpha subunit (332 aa).

A Mg(2+)-binding site is contributed by Glu254.

The protein belongs to the class-II aminoacyl-tRNA synthetase family. Phe-tRNA synthetase alpha subunit type 1 subfamily. In terms of assembly, tetramer of two alpha and two beta subunits. Requires Mg(2+) as cofactor.

It is found in the cytoplasm. It catalyses the reaction tRNA(Phe) + L-phenylalanine + ATP = L-phenylalanyl-tRNA(Phe) + AMP + diphosphate + H(+). This Hydrogenovibrio crunogenus (strain DSM 25203 / XCL-2) (Thiomicrospira crunogena) protein is Phenylalanine--tRNA ligase alpha subunit.